The sequence spans 164 residues: Putative Cys-tRNA(Pro)/Cys-tRNA(Cys) deacylase EbsC (164 aa).

This sequence belongs to the prolyl-tRNA editing family. YbaK/EbsC subfamily.

Functionally, affects the expression of the receptor, named binding substance, that mediates mating aggregate formation. Could be a regulatory protein that suppresses the function or expression of ebsA and/or ebsMB. The protein is Putative Cys-tRNA(Pro)/Cys-tRNA(Cys) deacylase EbsC of Enterococcus faecalis (strain ATCC 700802 / V583).